Reading from the N-terminus, the 105-residue chain is Anti-sigma factor RsrA (105 aa).

4 residues coordinate Zn(2+): Cys-11, His-37, Cys-41, and Cys-44. Cysteines 11 and 44 form a disulfide. Residues Lys-33 to Lys-47 form a contributes to redox-sensitivity region. Residues Gln-86 to Ser-105 are disordered. Over residues Ala-94–Ser-105 the composition is skewed to low complexity.

Belongs to the zinc-associated anti-sigma factor (ZAS) superfamily. In terms of assembly, interacts with cognate sigma factor SigR under reducing but not oxiding conditions. Treatment with the thiol-oxidzing agent diamide inhibits the interaction, while incubation with thioredoxin (trxA) stimulates the interaction. Zn(2+) is required as a cofactor. Under oxidizing conditions up to 3 disulfide bonds are formed. A single disulfide bond inhibits binding to SigR. Cys-11 forms a disulfide bond with either Cys-44 (the major bind) or Cys-41 (a minor bond).

A redox-regulated anti-sigma factor for extracytoplasmic function (ECF) sigma factor SigR, and a key sensor of disulfide stress. Holds SigR, its cognate ECF sigma factor, in an inactive form, inhibiting its sigma activity under reducing but not oxidizing conditions; oxidation and reduction of the anti-sigma factor is reversible. Mycothiol (MSH) is competent for reduction of RsrA, allowing it to bind to SigR. In conjunction with its cognate sigma factor SigR may sense the intracellular level of reduced MSH. Probably releases SigR during oxidative stress. The sequence is that of Anti-sigma factor RsrA (rsrA) from Streptomyces coelicolor (strain ATCC BAA-471 / A3(2) / M145).